Consider the following 870-residue polypeptide: Ubiquitin-protein ligase E3A (870 aa).

S8 is modified (phosphoserine). The C4-type; atypical zinc-finger motif lies at 42–81 (CGNEACTNEFCASCPTFLRMDNNAAAIKALELYKINAKLC). Residues 171–180 (EELKSLQEKD) show a composition bias toward basic and acidic residues. The tract at residues 171 to 223 (EELKSLQEKDEDKDEDEKEKAACSAAAMEEDSEASSSRMGDSSQGDNNVQKLG) is disordered. Over residues 208–220 (RMGDSSQGDNNVQ) the composition is skewed to polar residues. S213 bears the Phosphoserine mark. Residues 542-870 (NPADLKKQLY…ITYAKGFGML (329 aa)) form the HECT domain. Y654 bears the Phosphotyrosine; by ABL1 mark. The active-site Glycyl thioester intermediate is C838.

As to quaternary structure, the active form is probably a homotrimer. Binds UBQLN1 and UBQLN2. Interacts with the 26S proteasome. Interacts with BPY2. Interacts with HIF1AN, MAPK6 and NEURL4; interaction with MAPK6 may be mediated by NEURL4. Interacts with the proteasomal subunit PSMD4. Interacts with BMAL1. Interacts with ARC. Interacts with ESR1 and WBP2. In terms of processing, phosphorylation at Tyr-654 by ABL1 impairs E3 ligase activity. In terms of tissue distribution, widely expressed. Most abundant in brain, heart and thymus.

The protein resides in the cytoplasm. The protein localises to the nucleus. The enzyme catalyses S-ubiquitinyl-[E2 ubiquitin-conjugating enzyme]-L-cysteine + [acceptor protein]-L-lysine = [E2 ubiquitin-conjugating enzyme]-L-cysteine + N(6)-ubiquitinyl-[acceptor protein]-L-lysine.. It functions in the pathway protein modification; protein ubiquitination. In terms of biological role, E3 ubiquitin-protein ligase which accepts ubiquitin from an E2 ubiquitin-conjugating enzyme in the form of a thioester and transfers it to its substrates. Several substrates have been identified including the BMAL1, ARC, LAMTOR1, RAD23A and RAD23B, MCM7 (which is involved in DNA replication), annexin A1, the PML tumor suppressor, and the cell cycle regulator CDKN1B. Additionally, may function as a cellular quality control ubiquitin ligase by helping the degradation of the cytoplasmic misfolded proteins. Finally, UBE3A also promotes its own degradation in vivo. Plays an important role in the regulation of the circadian clock: involved in the ubiquitination of the core clock component BMAL1, leading to its proteasomal degradation. Acts as a regulator of synaptic development by mediating ubiquitination and degradation of ARC. Required for synaptic remodeling in neurons by mediating ubiquitination and degradation of LAMTOR1, thereby limiting mTORC1 signaling and activity-dependent synaptic remodeling. Synergizes with WBP2 in enhancing PGR activity. This Mus musculus (Mouse) protein is Ubiquitin-protein ligase E3A.